Here is a 566-residue protein sequence, read N- to C-terminus: Glucose-6-phosphate isomerase (566 aa).

The active-site Proton donor is the glutamate 374. Catalysis depends on residues histidine 405 and lysine 529.

Belongs to the GPI family.

The protein resides in the cytoplasm. It catalyses the reaction alpha-D-glucose 6-phosphate = beta-D-fructose 6-phosphate. Its pathway is carbohydrate biosynthesis; gluconeogenesis. The protein operates within carbohydrate degradation; glycolysis; D-glyceraldehyde 3-phosphate and glycerone phosphate from D-glucose: step 2/4. Catalyzes the reversible isomerization of glucose-6-phosphate to fructose-6-phosphate. The sequence is that of Glucose-6-phosphate isomerase from Bifidobacterium longum (strain NCC 2705).